The sequence spans 334 residues: Ketol-acid reductoisomerase (NADP(+)) (334 aa).

The KARI N-terminal Rossmann domain occupies 1–181; it reads MNRYYDKNAD…GGGRTGILET (181 aa). NADP(+) is bound by residues 24–27, arginine 47, serine 50, serine 52, and 82–85; these read YGSQ and DEFQ. The active site involves histidine 107. Glycine 133 is an NADP(+) binding site. Residues 182–323 enclose the KARI C-terminal knotted domain; that stretch reads SFKDETETDL…ESLRSMMPWI (142 aa). The Mg(2+) site is built by aspartate 190, glutamate 194, glutamate 226, and glutamate 230. A substrate-binding site is contributed by serine 251.

The protein belongs to the ketol-acid reductoisomerase family. Mg(2+) serves as cofactor.

The enzyme catalyses (2R)-2,3-dihydroxy-3-methylbutanoate + NADP(+) = (2S)-2-acetolactate + NADPH + H(+). It carries out the reaction (2R,3R)-2,3-dihydroxy-3-methylpentanoate + NADP(+) = (S)-2-ethyl-2-hydroxy-3-oxobutanoate + NADPH + H(+). The protein operates within amino-acid biosynthesis; L-isoleucine biosynthesis; L-isoleucine from 2-oxobutanoate: step 2/4. It functions in the pathway amino-acid biosynthesis; L-valine biosynthesis; L-valine from pyruvate: step 2/4. Involved in the biosynthesis of branched-chain amino acids (BCAA). Catalyzes an alkyl-migration followed by a ketol-acid reduction of (S)-2-acetolactate (S2AL) to yield (R)-2,3-dihydroxy-isovalerate. In the isomerase reaction, S2AL is rearranged via a Mg-dependent methyl migration to produce 3-hydroxy-3-methyl-2-ketobutyrate (HMKB). In the reductase reaction, this 2-ketoacid undergoes a metal-dependent reduction by NADPH to yield (R)-2,3-dihydroxy-isovalerate. The polypeptide is Ketol-acid reductoisomerase (NADP(+)) (Ruthia magnifica subsp. Calyptogena magnifica).